The chain runs to 301 residues: GTP cyclohydrolase FolE2 (301 aa).

Belongs to the GTP cyclohydrolase IV family.

The catalysed reaction is GTP + H2O = 7,8-dihydroneopterin 3'-triphosphate + formate + H(+). It functions in the pathway cofactor biosynthesis; 7,8-dihydroneopterin triphosphate biosynthesis; 7,8-dihydroneopterin triphosphate from GTP: step 1/1. In terms of biological role, converts GTP to 7,8-dihydroneopterin triphosphate. This Pseudomonas syringae pv. tomato (strain ATCC BAA-871 / DC3000) protein is GTP cyclohydrolase FolE2.